A 675-amino-acid polypeptide reads, in one-letter code: Regulator of G-protein signaling 9 (675 aa).

The region spanning 30 to 105 (PETGVRMHNQ…PDSSLYRFQT (76 aa)) is the DEP domain. Positions 222 to 283 (VRKEIMYYQQ…DTQFWDLNAK (62 aa)) constitute a G protein gamma domain. Residues 299–414 (NFSELIRDPK…LKSPIYKEML (116 aa)) enclose the RGS domain. Disordered regions lie at residues 524-571 (RVAL…PPKA) and 637-662 (DSGTCLMDSDDPRAGESGDQTTEKEV). A compositionally biased stretch (polar residues) spans 542–551 (SGANSGPSVT). Composition is skewed to basic and acidic residues over residues 552-562 (ENREPSADHSR) and 646-662 (DDPRAGESGDQTTEKEV).

In terms of assembly, heterodimer with GNB5. Interacts with RGS7BP, leading to regulate the subcellular location of the heterodimer formed with GNB5. Component of the RGS9-1-Gbeta5 complex composed of RGS9 (RGS9-1), Gbeta5 (GNB5) and RGS9BP. Interacts with PDE6G and GNAT1. In terms of processing, retinal isoform 1 is light-dependent phosphorylated at 'Ser-475'. Phosphorylation is decreased by light exposition. Interaction with RGS9BP is decreased when isoform 1 is phosphorylated at 'Ser-475'. In terms of tissue distribution, isoform 1 is expressed in photoreceptor outer segments. Isoform 2 is expressed in brain striatum.

The protein localises to the membrane. Inhibits signal transduction by increasing the GTPase activity of G protein alpha subunits thereby driving them into their inactive GDP-bound form. Binds to GNAT1. Involved in phototransduction; key element in the recovery phase of visual transduction. The sequence is that of Regulator of G-protein signaling 9 (Rgs9) from Mus musculus (Mouse).